The primary structure comprises 154 residues: 6,7-dimethyl-8-ribityllumazine synthase (154 aa).

Residues Phe-22, 56–58, and 80–82 contribute to the 5-amino-6-(D-ribitylamino)uracil site; these read AFE and TVI. Residue 85–86 participates in (2S)-2-hydroxy-3-oxobutyl phosphate binding; it reads AT. His-88 acts as the Proton donor in catalysis. Phe-113 is a binding site for 5-amino-6-(D-ribitylamino)uracil. Arg-127 contacts (2S)-2-hydroxy-3-oxobutyl phosphate.

This sequence belongs to the DMRL synthase family. In terms of assembly, forms an icosahedral capsid composed of 60 subunits, arranged as a dodecamer of pentamers.

It carries out the reaction (2S)-2-hydroxy-3-oxobutyl phosphate + 5-amino-6-(D-ribitylamino)uracil = 6,7-dimethyl-8-(1-D-ribityl)lumazine + phosphate + 2 H2O + H(+). Its pathway is cofactor biosynthesis; riboflavin biosynthesis; riboflavin from 2-hydroxy-3-oxobutyl phosphate and 5-amino-6-(D-ribitylamino)uracil: step 1/2. In terms of biological role, catalyzes the formation of 6,7-dimethyl-8-ribityllumazine by condensation of 5-amino-6-(D-ribitylamino)uracil with 3,4-dihydroxy-2-butanone 4-phosphate. This is the penultimate step in the biosynthesis of riboflavin. This chain is 6,7-dimethyl-8-ribityllumazine synthase, found in Bacillus amyloliquefaciens (Bacillus velezensis).